The chain runs to 402 residues: Probable tRNA pseudouridine synthase tag-124 (402 aa).

The active-site Nucleophile is aspartate 85. A disordered region spans residues 383–402 (SKKEKMAEKKKNGEESSDKL).

Belongs to the tRNA pseudouridine synthase TruA family.

The catalysed reaction is a uridine in tRNA = a pseudouridine in tRNA. In terms of biological role, formation of pseudouridine at position 38 and 39 in the anticodon stem and loop of transfer RNAs. This Caenorhabditis elegans protein is Probable tRNA pseudouridine synthase tag-124 (tag-124).